A 936-amino-acid chain; its full sequence is Protein translocase subunit SecA (936 aa).

ATP contacts are provided by residues Gln87, 105–109 (GEGKT), and Asp515. 4 residues coordinate Zn(2+): Cys920, Cys922, Cys931, and His932.

The protein belongs to the SecA family. As to quaternary structure, monomer and homodimer. Part of the essential Sec protein translocation apparatus which comprises SecA, SecYEG and auxiliary proteins SecDF-YajC and YidC. Zn(2+) serves as cofactor.

Its subcellular location is the cell inner membrane. It is found in the cytoplasm. It carries out the reaction ATP + H2O + cellular proteinSide 1 = ADP + phosphate + cellular proteinSide 2.. In terms of biological role, part of the Sec protein translocase complex. Interacts with the SecYEG preprotein conducting channel. Has a central role in coupling the hydrolysis of ATP to the transfer of proteins into and across the cell membrane, serving both as a receptor for the preprotein-SecB complex and as an ATP-driven molecular motor driving the stepwise translocation of polypeptide chains across the membrane. The protein is Protein translocase subunit SecA of Paraburkholderia phytofirmans (strain DSM 17436 / LMG 22146 / PsJN) (Burkholderia phytofirmans).